The sequence spans 1205 residues: Nitric oxide synthase 3 (1205 aa).

Positions 1–73 are disordered; sequence MGNLKSVGQE…PPEGPKFPRV (73 aa). The N-myristoyl glycine moiety is linked to residue G2. Residues C15 and C26 are each lipidated (S-palmitoyl cysteine). The span at 15 to 27 shows a compositional bias: gly residues; the sequence is CGLGLGLGLGLCG. Residues 33-47 show a composition bias toward pro residues; that stretch reads SPAPEPSRAPAPATP. Residues C96 and C101 each contribute to the Zn(2+) site. Residues 100–488 are interaction with NOSIP; sequence CCLGSLVLPR…PDPWKGSATK (389 aa). Residue S104 participates in (6R)-L-erythro-5,6,7,8-tetrahydrobiopterin binding. S116 is modified (phosphoserine; by CDK5). Position 186 (C186) interacts with heme b. The L-arginine site is built by Q249, W358, Y359, E363, and N368. A448, W449, and F462 together coordinate (6R)-L-erythro-5,6,7,8-tetrahydrobiopterin. Y477 contacts heme b. The interval 492-512 is calmodulin-binding; that stretch reads ITRKKTFKEVANAVKISASLM. T497 carries the post-translational modification Phosphothreonine; by AMPK and PKA. A Flavodoxin-like domain is found at 522–705; it reads ATILYASETG…AFRGWAKAAF (184 aa). S528, E529, T530, R532, S574, and T575 together coordinate FMN. Residues S617, S635, and S640 each carry the phosphoserine modification. Residues S656, C663, E689, and Q693 each coordinate FMN. The FAD-binding FR-type domain maps to 758–1004; it reads RKMFQATVLS…IRGAPSFRLP (247 aa). R778 is a binding site for NADP(+). Residue H800 participates in FAD binding. The interval 820-847 is disordered; it reads EDPPPPTESVAVEQLEKGSPGGPPPSWV. Residue S838 is modified to Phosphoserine. Positions 940, 942, 943, 958, 960, 964, 977, 978, and 979 each coordinate FAD. NADP(+) contacts are provided by T1018, R1051, S1080, R1081, K1087, Y1089, and Q1091. T1177 carries the post-translational modification Phosphothreonine. S1179 is modified (phosphoserine; by AMPK, PDPK1 and PKA). A Phosphoserine modification is found at S1181.

The protein belongs to the NOS family. In terms of assembly, homodimer. Interacts with NOSIP and NOSTRIN. Interacts with HSP90AB1. Forms a complex with ASL, ASS1 and SLC7A1; the complex regulates cell-autonomous L-arginine synthesis and citrulline recycling while channeling extracellular L-arginine to nitric oxide synthesis pathway. Requires heme b as cofactor. It depends on FAD as a cofactor. FMN is required as a cofactor. (6R)-L-erythro-5,6,7,8-tetrahydrobiopterin serves as cofactor. Post-translationally, phosphorylation by AMPK at Ser-1179 in the presence of Ca(2+)-calmodulin (CaM) activates activity. In absence of Ca(2+)-calmodulin, AMPK also phosphorylates Thr-497, resulting in inhibition of activity. Phosphorylation of Ser-116 by CDK5 reduces activity.

The protein resides in the cell membrane. It is found in the membrane. The protein localises to the caveola. Its subcellular location is the cytoplasm. It localises to the cytoskeleton. The protein resides in the golgi apparatus. It carries out the reaction 2 L-arginine + 3 NADPH + 4 O2 + H(+) = 2 L-citrulline + 2 nitric oxide + 3 NADP(+) + 4 H2O. With respect to regulation, stimulated by calcium/calmodulin. Inhibited by NOSIP and NOSTRIN. Functionally, produces nitric oxide (NO) which is implicated in vascular smooth muscle relaxation through a cGMP-mediated signal transduction pathway. NO mediates vascular endothelial growth factor (VEGF)-induced angiogenesis in coronary vessels and promotes blood clotting through the activation of platelets. This is Nitric oxide synthase 3 (NOS3) from Bos taurus (Bovine).